The following is a 123-amino-acid chain: Ig heavy chain V region HPCG13 (123 aa).

Positions 1 to 114 (EVKLVESGGG…GSYWYFDVWG (114 aa)) constitute an Ig-like domain.

This chain is Ig heavy chain V region HPCG13, found in Mus musculus (Mouse).